The following is a 676-amino-acid chain: Zinc finger protein 418 (676 aa).

One can recognise a KRAB domain in the interval 5 to 91 (VAFEDVAVNF…HSCEMCGAIL (87 aa)). 16 C2H2-type zinc fingers span residues 82 to 105 (HSCE…GTHH), 230 to 252 (CYCW…QRVH), 258 to 280 (YECG…QRVH), 286 to 308 (YECG…QRVH), 314 to 336 (YECG…QRVH), 342 to 364 (YECE…QRGH), 370 to 392 (YECE…HRVH), 398 to 420 (YECG…QRGH), 426 to 448 (YECG…QRSH), 454 to 476 (YECR…QRVH), 482 to 504 (YECN…QRVH), 510 to 532 (FECS…RRVH), 538 to 560 (YECG…QKTH), 591 to 613 (YECR…QRLH), 619 to 641 (YECS…RRVH), and 647 to 669 (YECS…QRVH).

This sequence belongs to the krueppel C2H2-type zinc-finger protein family. In terms of tissue distribution, highly expressed in heart.

The protein resides in the nucleus. Transcriptional repressor. May play a role as regulator of the ubiquitin-proteasome system and autophagy-lysosomal pathway. In Homo sapiens (Human), this protein is Zinc finger protein 418 (ZNF418).